We begin with the raw amino-acid sequence, 142 residues long: Transcriptional regulator MraZ (142 aa).

SpoVT-AbrB domains follow at residues 5–51 and 77–120; these read ASAL…PRPE and AADV…DAAT.

Belongs to the MraZ family. Forms oligomers.

The protein resides in the cytoplasm. Its subcellular location is the nucleoid. The sequence is that of Transcriptional regulator MraZ from Ralstonia nicotianae (strain ATCC BAA-1114 / GMI1000) (Ralstonia solanacearum).